A 589-amino-acid chain; its full sequence is 2-succinyl-5-enolpyruvyl-6-hydroxy-3-cyclohexene-1-carboxylate synthase (589 aa).

The protein belongs to the TPP enzyme family. MenD subfamily. In terms of assembly, homodimer. Mg(2+) serves as cofactor. It depends on Mn(2+) as a cofactor. The cofactor is thiamine diphosphate.

It carries out the reaction isochorismate + 2-oxoglutarate + H(+) = 5-enolpyruvoyl-6-hydroxy-2-succinyl-cyclohex-3-ene-1-carboxylate + CO2. It participates in quinol/quinone metabolism; 1,4-dihydroxy-2-naphthoate biosynthesis; 1,4-dihydroxy-2-naphthoate from chorismate: step 2/7. Its pathway is quinol/quinone metabolism; menaquinone biosynthesis. Functionally, catalyzes the thiamine diphosphate-dependent decarboxylation of 2-oxoglutarate and the subsequent addition of the resulting succinic semialdehyde-thiamine pyrophosphate anion to isochorismate to yield 2-succinyl-5-enolpyruvyl-6-hydroxy-3-cyclohexene-1-carboxylate (SEPHCHC). The sequence is that of 2-succinyl-5-enolpyruvyl-6-hydroxy-3-cyclohexene-1-carboxylate synthase from Myxococcus xanthus (strain DK1622).